Here is a 131-residue protein sequence, read N- to C-terminus: Arsenate reductase 2 (131 aa).

Active-site nucleophile residues include Cys10, Cys82, and Cys89. 2 disulfide bridges follow: Cys10-Cys82 and Cys82-Cys89.

Belongs to the low molecular weight phosphotyrosine protein phosphatase family. Thioredoxin-coupled ArsC subfamily.

Its subcellular location is the cytoplasm. The enzyme catalyses arsenate + [thioredoxin]-dithiol + H(+) = arsenite + [thioredoxin]-disulfide + H2O. Functionally, catalyzes the reduction of arsenate [As(V)] to arsenite [As(III)]. The polypeptide is Arsenate reductase 2 (Staphylococcus saprophyticus subsp. saprophyticus (strain ATCC 15305 / DSM 20229 / NCIMB 8711 / NCTC 7292 / S-41)).